The primary structure comprises 934 residues: Pesticidal crystal protein Cry1Aa (934 aa).

The protein belongs to the delta endotoxin family.

Its function is as follows. Promotes colloidosmotic lysis by binding to the midgut epithelial cells of many lepidopteran larvae. The protein is Pesticidal crystal protein Cry1Aa (cry1Aa) of Bacillus thuringiensis subsp. sotto.